The sequence spans 551 residues: Probable NADH-ubiquinone oxidoreductase C3A11.07, mitochondrial (551 aa).

The transit peptide at 1-37 directs the protein to the mitochondrion; sequence MLFSRSILRGMPKAGIPKSPLALSASRNLRLANSVRF. Residue 93–123 participates in FAD binding; sequence TLVVLGAGWGATSILRTIDTSLFNVIVVSPR. 255 to 291 is a binding site for NAD(+); the sequence is VHTVVVGGGPTGMEFAGEMADFIEDDLKSWYPELADD.

Belongs to the NADH dehydrogenase family.

It is found in the mitochondrion. It carries out the reaction a quinone + NADH + H(+) = a quinol + NAD(+). It catalyses the reaction a ubiquinone + NADH + H(+) = a ubiquinol + NAD(+). Catalyzes the oxidation of NADH. The polypeptide is Probable NADH-ubiquinone oxidoreductase C3A11.07, mitochondrial (Schizosaccharomyces pombe (strain 972 / ATCC 24843) (Fission yeast)).